Consider the following 657-residue polypeptide: tRNA 5-methylaminomethyl-2-thiouridine biosynthesis bifunctional protein MnmC (657 aa).

The segment at 1-235 (MSDAHNAQLD…KREMLAGPFQ (235 aa)) is tRNA (mnm(5)s(2)U34)-methyltransferase. The segment at 261–657 (IGAGLAGCAT…QLIRGTGSPT (397 aa)) is FAD-dependent cmnm(5)s(2)U34 oxidoreductase.

In the N-terminal section; belongs to the methyltransferase superfamily. tRNA (mnm(5)s(2)U34)-methyltransferase family. This sequence in the C-terminal section; belongs to the DAO family. Requires FAD as cofactor.

The protein resides in the cytoplasm. The enzyme catalyses 5-aminomethyl-2-thiouridine(34) in tRNA + S-adenosyl-L-methionine = 5-methylaminomethyl-2-thiouridine(34) in tRNA + S-adenosyl-L-homocysteine + H(+). Catalyzes the last two steps in the biosynthesis of 5-methylaminomethyl-2-thiouridine (mnm(5)s(2)U) at the wobble position (U34) in tRNA. Catalyzes the FAD-dependent demodification of cmnm(5)s(2)U34 to nm(5)s(2)U34, followed by the transfer of a methyl group from S-adenosyl-L-methionine to nm(5)s(2)U34, to form mnm(5)s(2)U34. This is tRNA 5-methylaminomethyl-2-thiouridine biosynthesis bifunctional protein MnmC from Ectopseudomonas mendocina (strain ymp) (Pseudomonas mendocina).